A 429-amino-acid polypeptide reads, in one-letter code: D-inositol 3-phosphate glycosyltransferase (429 aa).

Position 20 (H20) interacts with 1D-myo-inositol 3-phosphate. Residues 26–27 (QP) and G34 contribute to the UDP-N-acetyl-alpha-D-glucosamine site. Residues 31 to 36 (DAGGMN), K89, Y122, T146, and R166 each bind 1D-myo-inositol 3-phosphate. The UDP-N-acetyl-alpha-D-glucosamine site is built by R240, K245, and Q306. Residues Y315, R316, and A318 each coordinate Mg(2+). UDP-N-acetyl-alpha-D-glucosamine-binding residues include E328 and E336. T342 is a binding site for Mg(2+).

Belongs to the glycosyltransferase group 1 family. MshA subfamily. In terms of assembly, homodimer.

The catalysed reaction is 1D-myo-inositol 3-phosphate + UDP-N-acetyl-alpha-D-glucosamine = 1D-myo-inositol 2-acetamido-2-deoxy-alpha-D-glucopyranoside 3-phosphate + UDP + H(+). Catalyzes the transfer of a N-acetyl-glucosamine moiety to 1D-myo-inositol 3-phosphate to produce 1D-myo-inositol 2-acetamido-2-deoxy-glucopyranoside 3-phosphate in the mycothiol biosynthesis pathway. The polypeptide is D-inositol 3-phosphate glycosyltransferase (Nocardiopsis dassonvillei (strain ATCC 23218 / DSM 43111 / CIP 107115 / JCM 7437 / KCTC 9190 / NBRC 14626 / NCTC 10488 / NRRL B-5397 / IMRU 509) (Actinomadura dassonvillei)).